Consider the following 55-residue polypeptide: Conotoxin Cal22c (55 aa).

The propeptide occupies 1–5; sequence GRPSA.

In terms of processing, contains 4 disulfide bonds. As to expression, expressed by the venom duct.

Its subcellular location is the secreted. Probable neurotoxin with unknown target. Possibly targets ion channels. This Californiconus californicus (California cone) protein is Conotoxin Cal22c.